The chain runs to 468 residues: UDP-N-acetylmuramate--L-alanine ligase (468 aa).

114–120 (GTHGKTT) is a binding site for ATP.

This sequence belongs to the MurCDEF family.

It localises to the cytoplasm. It catalyses the reaction UDP-N-acetyl-alpha-D-muramate + L-alanine + ATP = UDP-N-acetyl-alpha-D-muramoyl-L-alanine + ADP + phosphate + H(+). It functions in the pathway cell wall biogenesis; peptidoglycan biosynthesis. Functionally, cell wall formation. This is UDP-N-acetylmuramate--L-alanine ligase from Methylobacterium radiotolerans (strain ATCC 27329 / DSM 1819 / JCM 2831 / NBRC 15690 / NCIMB 10815 / 0-1).